The following is a 64-amino-acid chain: Large ribosomal subunit protein bL35c (64 aa).

This sequence belongs to the bacterial ribosomal protein bL35 family.

It is found in the plastid. Its subcellular location is the chloroplast. This Cyanidium caldarium (Red alga) protein is Large ribosomal subunit protein bL35c.